Here is a 47-residue protein sequence, read N- to C-terminus: Lysis protein for colicin E7 (47 aa).

The first 19 residues, 1–19 (MKKITGIILLLLAAIILAA), serve as a signal peptide directing secretion. Cys20 carries N-palmitoyl cysteine lipidation. Cys20 carries the S-diacylglycerol cysteine lipid modification.

It is found in the cell outer membrane. In terms of biological role, lysis proteins are required for both colicin release and partial cell lysis. This chain is Lysis protein for colicin E7 (lys), found in Escherichia coli.